We begin with the raw amino-acid sequence, 452 residues long: MLLLLLLLLVAAAQAVALAPRRFTPDWQSLDSRPLPSWFDEAKFGVFVHWGVFSVPAWGSEWFWWHWQGDRMPAYQRFMTENYPPGFSYADFAPQFTARFFHPDQWAELFQAAGAKYVVLTTKHHEGFTNWPSPVSWNWNSKDVGPHRDLVGELGAAVRKRNIRYGLYHSLLEWFHPLYLLDKKNGFKTQHFVRAKTMPELYDLVNSYKPDLIWSDGEWECPDTYWNSTSFLAWLYNDSPVKDEVIVNDRWGQNCSCHHGGYYNCQDKYKPQSLPDHKWEMCTSMDRASWGYRKDMTMSTIAKENEIIEELVQTVSLGGNYLLNIGPTKDGLIVPIFQERLLAVGKWLQINGEAIYASKPWRVQSEKNKTVVWYTTKNATVYATFLYWPENGIVNLKSPKTTSATKITMLGLEGDLSWTQDPLEGVLISLPQLPPTVLPVEFAWTLKLTKVN.

The first 17 residues, 1–17 (MLLLLLLLLVAAAQAVA), serve as a signal peptide directing secretion. N-linked (GlcNAc...) asparagine glycosylation is found at Asn227, Asn254, Asn368, and Asn378.

It belongs to the glycosyl hydrolase 29 family. As to quaternary structure, homotetramer.

Its subcellular location is the lysosome. The catalysed reaction is an alpha-L-fucoside + H2O = L-fucose + an alcohol. It catalyses the reaction a neolactoside IV(2)-alpha-Fuc-nLc4Cer(d18:1(4E)) + H2O = a neolactoside nLc4Cer(d18:1(4E)) + L-fucose. It carries out the reaction a neolactoside IV(2)-alpha-Fuc-nLc4Cer(d18:0) + H2O = a neolactoside nLc4Cer(d18:0) + L-fucose. Functionally, alpha-L-fucosidase is responsible for hydrolyzing the alpha-1,6-linked fucose joined to the reducing-end N-acetylglucosamine of the carbohydrate moieties of glycoproteins. The chain is Tissue alpha-L-fucosidase (Fuca1) from Mus musculus (Mouse).